Consider the following 548-residue polypeptide: Isocitrate dehydrogenase [NAD(+)] 1, mitochondrial (548 aa).

The transit peptide at 1-53 (MSSLSTLRILHSTAGRRWASYYGIYPKSAACSSSSVAIARFFSTAADRPPKHA) directs the protein to the mitochondrion. Residues 132–134 (TIT) and N153 contribute to the NAD(+) site. D-threo-isocitrate contacts are provided by residues 151–157 (SPNGAMR), R187, Y194, K266, D311, and D335. Residues D311, D335, and D339 each coordinate Mg(2+). Residues 372–377 (HGTVSD) and N391 each bind NAD(+). Positions 499–534 (IDEEAINGLFQKYDKNGDGFIDFEEFTRMLVKMNLA) constitute an EF-hand domain. 5 residues coordinate Ca(2+): D512, N514, D516, F518, and E523.

It belongs to the isocitrate and isopropylmalate dehydrogenases family. Homodimer. It depends on Mg(2+) as a cofactor. Mn(2+) is required as a cofactor.

Its subcellular location is the mitochondrion. It catalyses the reaction D-threo-isocitrate + NAD(+) = 2-oxoglutarate + CO2 + NADH. With respect to regulation, the homodimer exhibits allosteric regulation by isocitrate. Activated by Mn(2+) and Mg(2+). No activation by Na(+), K(+) or Li(+). Inhibited by Co(2+), Cu(2+) and Ni(2+), but not with Ca(2+) in the presence of Mn(2+) or Mg(2+). Competitively inhibited by NADH, but no effect on activity by 1.0 mM citrate. Strongly inhibited by excess ATP, ADP, AMP and alpha-ketoglutarate. Its function is as follows. Performs an essential role in the oxidative function of the tricarboxylic acid cycle and respiration. Catalyzes the decarboxylation of isocitrate to produce 2-oxoglutarate and generate NADH to provide electrons for energy production. No activity with NADP(+). The sequence is that of Isocitrate dehydrogenase [NAD(+)] 1, mitochondrial from Phaeodactylum tricornutum (strain CCAP 1055/1).